The primary structure comprises 140 residues: Large ribosomal subunit protein uL11 (140 aa).

Belongs to the universal ribosomal protein uL11 family. As to quaternary structure, part of the ribosomal stalk of the 50S ribosomal subunit. Interacts with L10 and the large rRNA to form the base of the stalk. L10 forms an elongated spine to which L12 dimers bind in a sequential fashion forming a multimeric L10(L12)X complex. One or more lysine residues are methylated.

Forms part of the ribosomal stalk which helps the ribosome interact with GTP-bound translation factors. The sequence is that of Large ribosomal subunit protein uL11 from Symbiobacterium thermophilum (strain DSM 24528 / JCM 14929 / IAM 14863 / T).